Reading from the N-terminus, the 1304-residue chain is Neuronal cell adhesion molecule (1304 aa).

The N-terminal stretch at 1-24 (MQLKIMPKKKRLSAGRVPLILFLC) is a signal peptide. Residues 25 to 1167 (QMISALEVPL…ASRQVDIATQ (1143 aa)) are Extracellular-facing. 2 consecutive Ig-like domains span residues 46–134 (PTIT…AAVS) and 141–235 (PSRS…QPIS). 2 disulfides stabilise this stretch: Cys68/Cys123 and Cys167/Cys218. N-linked (GlcNAc...) asparagine glycosylation occurs at Asn83. Residues Asn223, Asn245, Asn251, Asn276, and Asn314 are each glycosylated (N-linked (GlcNAc...) asparagine). Ig-like domains are found at residues 267 to 356 (PPTF…ISVR), 361 to 448 (PYWI…AFVN), 454 to 541 (PRIL…VHLE), and 545 to 632 (PTWI…AVLS). 2 disulfides stabilise this stretch: Cys292-Cys340 and Cys382-Cys432. N-linked (GlcNAc...) asparagine glycans are attached at residues Asn433 and Asn507. 2 cysteine pairs are disulfide-bonded: Cys476–Cys525 and Cys567–Cys616. N-linked (GlcNAc...) asparagine glycans are attached at residues Asn619, Asn716, and Asn802. Fibronectin type-III domains are found at residues 649–744 (PPFD…TKAS), 746–843 (PDKN…SGED), 848–950 (APGN…TPEG), 954–1051 (APSS…VDEA), and 1064–1156 (QAVN…TGPA). An N-linked (GlcNAc...) (complex) asparagine glycan is attached at Asn858. N-linked (GlcNAc...) asparagine glycans are attached at residues Asn993, Asn1009, Asn1019, Asn1072, Asn1083, and Asn1115. A helical transmembrane segment spans residues 1168–1190 (GWFIGLMCAVALLILILLIVCFI). The Cytoplasmic segment spans residues 1191–1304 (RRNKGGKYPV…SPVNAMNSFV (114 aa)). A compositionally biased stretch (basic and acidic residues) spans 1199–1219 (PVKEKEDAHADPEIQPMKEDD). The interval 1199–1304 (PVKEKEDAHA…SPVNAMNSFV (106 aa)) is disordered. Phosphothreonine is present on Thr1221. Tyr1225 bears the Phosphotyrosine mark. Position 1226 is a phosphoserine (Ser1226). The span at 1241-1250 (PSDRTVKKED) shows a compositional bias: basic and acidic residues. 6 positions are modified to phosphoserine: Ser1251, Ser1254, Ser1271, Ser1290, Ser1291, and Ser1295. Over residues 1288 to 1304 (NESSEAPSPVNAMNSFV) the composition is skewed to polar residues.

Belongs to the immunoglobulin superfamily. L1/neurofascin/NgCAM family. In terms of assembly, constituent of a NFASC/NRCAM/ankyrin-G complex. Detected in a complex with CNTN1 and PTPRB. Interacts with GLDN/gliomedin. Interacts with MYOC. In terms of tissue distribution, detected in all the examined tissues. In the brain it was detected in the amygdala, caudate nucleus, corpus callosum, hippocampus, hypothalamus, substantia nigra, subthalamic nucleus and thalamus.

The protein localises to the cell membrane. It localises to the cell projection. It is found in the axon. The protein resides in the secreted. Its function is as follows. Cell adhesion protein that is required for normal responses to cell-cell contacts in brain and in the peripheral nervous system. Plays a role in neurite outgrowth in response to contactin binding. Plays a role in mediating cell-cell contacts between Schwann cells and axons. Plays a role in the formation and maintenance of the nodes of Ranvier on myelinated axons. Nodes of Ranvier contain clustered sodium channels that are crucial for the saltatory propagation of action potentials along myelinated axons. During development, nodes of Ranvier are formed by the fusion of two heminodes. Required for normal clustering of sodium channels at heminodes; not required for the formation of mature nodes with normal sodium channel clusters. Required, together with GLDN, for maintaining NFASC and sodium channel clusters at mature nodes of Ranvier. In Homo sapiens (Human), this protein is Neuronal cell adhesion molecule (NRCAM).